We begin with the raw amino-acid sequence, 315 residues long: Thymidylate synthase (315 aa).

DUMP contacts are provided by residues R29 and 156–157 (RR). C176 functions as the Nucleophile in the catalytic mechanism. DUMP is bound by residues 213–216 (RSCD), N224, and 254–256 (HVY). Residue D216 participates in (6R)-5,10-methylene-5,6,7,8-tetrahydrofolate binding.

This sequence belongs to the thymidylate synthase family. In terms of assembly, homodimer.

It catalyses the reaction dUMP + (6R)-5,10-methylene-5,6,7,8-tetrahydrofolate = 7,8-dihydrofolate + dTMP. The protein operates within pyrimidine metabolism; dTTP biosynthesis. The polypeptide is Thymidylate synthase (TMP1) (Candida albicans (strain SC5314 / ATCC MYA-2876) (Yeast)).